Consider the following 103-residue polypeptide: Large ribosomal subunit protein bL21 (103 aa).

Belongs to the bacterial ribosomal protein bL21 family. In terms of assembly, part of the 50S ribosomal subunit. Contacts protein L20.

In terms of biological role, this protein binds to 23S rRNA in the presence of protein L20. This chain is Large ribosomal subunit protein bL21, found in Pseudomonas paraeruginosa (strain DSM 24068 / PA7) (Pseudomonas aeruginosa (strain PA7)).